The following is a 183-amino-acid chain: Streptavidin-V1 (183 aa).

The signal sequence occupies residues 1 to 24; it reads MRKIVVAAIAVSLTTVSITASASA. The region spanning 37–159 is the Avidin-like domain; it reads AEAGITGTWY…GHDTFTKVKP (123 aa). Residues Tyr-67 and Tyr-78 each coordinate biotin. The Cell attachment site; atypical signature appears at 83 to 85; the sequence is RYD. Biotin-binding residues include Trp-116, Trp-132, and Trp-144.

It belongs to the avidin/streptavidin family. In terms of assembly, homotetramer.

It localises to the secreted. Its function is as follows. The biological function of streptavidin is not known. Forms a strong non-covalent specific complex with biotin (one molecule of biotin per subunit of streptavidin). The chain is Streptavidin-V1 from Streptomyces violaceus (Streptomyces venezuelae).